We begin with the raw amino-acid sequence, 162 residues long: MSDSLPTLSHLDDSGQVRMVDVGDKADADRLAIARAAVRMSPQAYGLLTQPGQGKGEVLNTARVAGVLAAKRCAELIPLCHSLPLAFVGIEFSLDDEGHRVEIRATCRTRYKTGVEMEAMTACSMAALTIYDMCKAADKGIVIEQVRLAYKSGGKSGEWRND.

Substrate-binding positions include 79–81 and 117–118; these read LCH and ME. The active site involves Asp-132.

It belongs to the MoaC family. As to quaternary structure, homohexamer; trimer of dimers.

It carries out the reaction (8S)-3',8-cyclo-7,8-dihydroguanosine 5'-triphosphate = cyclic pyranopterin phosphate + diphosphate. The protein operates within cofactor biosynthesis; molybdopterin biosynthesis. Catalyzes the conversion of (8S)-3',8-cyclo-7,8-dihydroguanosine 5'-triphosphate to cyclic pyranopterin monophosphate (cPMP). This chain is Cyclic pyranopterin monophosphate synthase, found in Bordetella avium (strain 197N).